A 587-amino-acid chain; its full sequence is 5-aminolevulinate synthase, erythroid-specific, mitochondrial (587 aa).

A mitochondrion-targeting transit peptide spans 1–49; it reads MVTAAMLLQCCPVLARGPTSLLGKVVKTHQFLFGIGRCPILATQGPNCS. R163 is a binding site for succinyl-CoA. Pyridoxal 5'-phosphate-binding residues include C258 and F259. S280 and K299 together coordinate succinyl-CoA. Pyridoxal 5'-phosphate is bound by residues S332, H360, and T388. Residue K391 is part of the active site. K391 carries the N6-(pyridoxal phosphate)lysine modification. Pyridoxal 5'-phosphate is bound by residues T420 and T421. Residue T508 participates in succinyl-CoA binding.

Belongs to the class-II pyridoxal-phosphate-dependent aminotransferase family. As to quaternary structure, homodimer. Interacts with SUCLA2. Interacts with SUCLA2. Requires pyridoxal 5'-phosphate as cofactor. As to expression, erythroid-specific.

The protein resides in the mitochondrion inner membrane. The enzyme catalyses succinyl-CoA + glycine + H(+) = 5-aminolevulinate + CO2 + CoA. The protein operates within porphyrin-containing compound metabolism; protoporphyrin-IX biosynthesis; 5-aminolevulinate from glycine: step 1/1. With respect to regulation, down-regulated by itaconyl-CoA which acts as a competitive inhibitor of succinyl-CoA substrate. Its function is as follows. Catalyzes the pyridoxal 5'-phosphate (PLP)-dependent condensation of succinyl-CoA and glycine to form aminolevulinic acid (ALA), with CoA and CO2 as by-products. Contributes significantly to heme formation during erythropoiesis. Catalyzes the pyridoxal 5'-phosphate (PLP)-dependent condensation of succinyl-CoA and glycine to form aminolevulinic acid (ALA), with CoA and CO2 as by-products. Catalytic activity is 75-85% of isoform 1 activity. In terms of biological role, catalyzes the pyridoxal 5'-phosphate (PLP)-dependent condensation of succinyl-CoA and glycine to form aminolevulinic acid (ALA), with CoA and CO2 as by-products. Catalytic activity is 65-75% of isoform 1 activity. In Homo sapiens (Human), this protein is 5-aminolevulinate synthase, erythroid-specific, mitochondrial.